The chain runs to 133 residues: Mitochondrial import inner membrane translocase subunit TIM17-3 (133 aa).

The next 4 helical transmembrane spans lie at 15 to 35 (IVNAIGYAFGAGAVGGSVYHF), 63 to 83 (GGTFAVFGGLLSTFDYALVRI), 90 to 105 (WNSIVAGAATGGVLSI), and 115 to 128 (SAVMFGFFLAVLNP).

The protein belongs to the Tim17/Tim22/Tim23 family. Component of the TIM17:23 complex at least composed of TIM23, TIM17 and TIM50. The complex interacts with the TIM44 component of the PAM complex. As to expression, expressed in cotyledons, roots, flowers and leaves.

Its subcellular location is the mitochondrion inner membrane. Functionally, essential component of the TIM17:23 complex, a complex that mediates the translocation of transit peptide-containing proteins across the mitochondrial inner membrane. Links the inner and outer membranes. In Arabidopsis thaliana (Mouse-ear cress), this protein is Mitochondrial import inner membrane translocase subunit TIM17-3 (TIM17-3).